Here is a 423-residue protein sequence, read N- to C-terminus: D-tagatose-1,6-bisphosphate aldolase subunit GatZ (423 aa).

The protein belongs to the GatZ/KbaZ family. GatZ subfamily. Forms a complex with GatY.

The protein operates within carbohydrate metabolism; D-tagatose 6-phosphate degradation; D-glyceraldehyde 3-phosphate and glycerone phosphate from D-tagatose 6-phosphate: step 2/2. Component of the tagatose-1,6-bisphosphate aldolase GatYZ that is required for full activity and stability of the Y subunit. Could have a chaperone-like function for the proper and stable folding of GatY. When expressed alone, GatZ does not show any aldolase activity. Is involved in the catabolism of galactitol. This Salmonella gallinarum (strain 287/91 / NCTC 13346) protein is D-tagatose-1,6-bisphosphate aldolase subunit GatZ.